The sequence spans 313 residues: Olfactory receptor 51A4 (313 aa).

Residues 1 to 27 (MSIINTSYVEITTFFLVGMPGLEYAHI) are Extracellular-facing. Asparagine 5 carries N-linked (GlcNAc...) asparagine glycosylation. The chain crosses the membrane as a helical span at residues 28–48 (WISIPICSMYLIAILGNGTIL). Over 49–56 (FIIKTEPS) the chain is Cytoplasmic. A helical transmembrane segment spans residues 57–77 (LHEPMYYFLSMLAMSDLGLSL). Topologically, residues 78–101 (SSLPTVLSIFLFNAPEISSNACFA) are extracellular. Cysteine 99 and cysteine 191 are joined by a disulfide. Residues 102 to 122 (QEFFIHGFSVLESSVLLIMSF) form a helical membrane-spanning segment. At 123–141 (DRFLAIHNPLRYTSILTTV) the chain is on the cytoplasmic side. The helical transmembrane segment at 142–162 (RVAQIGIVFSFKSMLLVLPFP) threads the bilayer. Residues 163-198 (FTLRNLRYCKKNQLSHSYCLHQDVMKLACSDNRIDV) lie on the Extracellular side of the membrane. Residues 199 to 218 (IYGFFGALCLMVDFILIAVS) traverse the membrane as a helical segment. At 219 to 238 (YTLILKTVLGIASKKEQLKA) the chain is on the cytoplasmic side. The chain crosses the membrane as a helical span at residues 239–259 (LNTCVSHICAVIIFYLPIINL). Over 260 to 274 (AVVHRFARHVSPLIN) the chain is Extracellular. A helical transmembrane segment spans residues 275–295 (VLMANVLLLVPPLTNPIVYCV). At 296-313 (KTKQIRVRVVAKLCQRKI) the chain is on the cytoplasmic side.

It belongs to the G-protein coupled receptor 1 family.

It is found in the cell membrane. Functionally, odorant receptor. The sequence is that of Olfactory receptor 51A4 (OR51A4) from Homo sapiens (Human).